A 162-amino-acid chain; its full sequence is Tegument protein BLRF2 (162 aa).

Residues 12-43 are a coiled coil; that stretch reads VKAVDMSMEDMAARLARLESENKALKQQVLRG. Positions 121 to 162 are disordered; it reads GAKGQPSPGEGTRLRESNDPNATRRARSRSRGREAKKVQISD. Basic and acidic residues predominate over residues 151–162; the sequence is RGREAKKVQISD.

This sequence belongs to the herpesviridae BLRF2 family. In terms of assembly, homooligomer; homooligomerizes and binds double-stranded DNA (dsDNA) cooperatively. Interacts with host CGAS.

It localises to the virion tegument. The protein resides in the host cytoplasm. In terms of biological role, plays a role in the inhibition of host innate immune system by targeting the CGAS enzymatic activity which is the principal cytosolic DNA sensor that detects invading viral DNA. Acts by inhibiting CGAS-DNA phase separation: directly binds double-stranded DNA (dsDNA) in a length dependent but sequence independent manner and is able to form DNA-induced phase separation in infected cells. DNA phase separation of ORF52 mediates disruption of liquid-like droplets in which CGAS is activated, thereby preventing CGAS activity. This Epstein-Barr virus (strain GD1) (HHV-4) protein is Tegument protein BLRF2.